The sequence spans 857 residues: Linoleate 9S-lipoxygenase 6 (857 aa).

Residues 26 to 156 (NALDFTDLAG…RYKSDRIFFA (131 aa)) enclose the PLAT domain. Residues 159–857 (PYLPSETPEL…GKGIPNSVSI (699 aa)) enclose the Lipoxygenase domain. Residues 205-243 (NPDQGEQNVRTTLGGSADYPYPRRGRTGRPPTRTDPKSE) form a disordered region. The segment covering 208–218 (QGEQNVRTTLG) has biased composition (polar residues). The Fe cation site is built by histidine 518, histidine 523, histidine 709, asparagine 713, and isoleucine 857.

Belongs to the lipoxygenase family. Monomer. Fe cation serves as cofactor. Expressed in tubers and roots. Detected in leaves, petioles and stems.

The protein localises to the cytoplasm. It carries out the reaction (9Z,12Z)-octadecadienoate + O2 = (9S)-hydroperoxy-(10E,12Z)-octadecadienoate. Its pathway is lipid metabolism; oxylipin biosynthesis. Plant lipoxygenases may be involved in a number of diverse aspects of plant physiology including growth and development, pest resistance, and senescence or responses to wounding. Catalyzes the hydroperoxidation of lipids containing a cis,cis-1,4-pentadiene structure. Linoleic and linolenic acids are the preferred substrates, but is also active with arachidonic acid. The products are almost exclusively the S enantiomers. This is Linoleate 9S-lipoxygenase 6 (LOX1.6) from Solanum tuberosum (Potato).